The primary structure comprises 556 residues: 2-succinyl-5-enolpyruvyl-6-hydroxy-3-cyclohexene-1-carboxylate synthase (556 aa).

The protein belongs to the TPP enzyme family. MenD subfamily. Homodimer. Mg(2+) is required as a cofactor. Mn(2+) serves as cofactor. The cofactor is thiamine diphosphate.

The enzyme catalyses isochorismate + 2-oxoglutarate + H(+) = 5-enolpyruvoyl-6-hydroxy-2-succinyl-cyclohex-3-ene-1-carboxylate + CO2. It participates in quinol/quinone metabolism; 1,4-dihydroxy-2-naphthoate biosynthesis; 1,4-dihydroxy-2-naphthoate from chorismate: step 2/7. It functions in the pathway quinol/quinone metabolism; menaquinone biosynthesis. Functionally, catalyzes the thiamine diphosphate-dependent decarboxylation of 2-oxoglutarate and the subsequent addition of the resulting succinic semialdehyde-thiamine pyrophosphate anion to isochorismate to yield 2-succinyl-5-enolpyruvyl-6-hydroxy-3-cyclohexene-1-carboxylate (SEPHCHC). This is 2-succinyl-5-enolpyruvyl-6-hydroxy-3-cyclohexene-1-carboxylate synthase from Escherichia coli O17:K52:H18 (strain UMN026 / ExPEC).